The sequence spans 1040 residues: Vacuolar membrane protease (1040 aa).

At 1–9 (MINPISFRP) the chain is on the cytoplasmic side. A helical transmembrane segment spans residues 10–30 (GPVTFWTTLIYLALLIPIVII). Residues 31–405 (NEEPPAAPKT…SFVLFGLRGM (375 aa)) lie on the Vacuolar side of the membrane. N48, N117, N120, and N129 each carry an N-linked (GlcNAc...) asparagine glycan. The Zn(2+) site is built by H186 and D198. Residue E232 is the Proton acceptor of the active site. Zn(2+) contacts are provided by E233, E258, and H331. A helical membrane pass occupies residues 406-426 (FAWSLTLLIATPLILVGITWL). Residues 427-436 (LRNLDKDYFF) are Cytoplasmic-facing. Residues 437-456 (TSTVKTKEHPEYEAVPIGGW) traverse the membrane as a helical segment. Over 457 to 462 (KGFFRW) the chain is Vacuolar. Residues 463 to 483 (AMMVSIFYFSFWMIMRGANFV) traverse the membrane as a helical segment. At 484 to 490 (RPSALHR) the chain is on the cytoplasmic side. A helical transmembrane segment spans residues 491–511 (GYANLWLFVFGWIVLVAVTAL). At 512-521 (EDRRRIAAGY) the chain is on the vacuolar side. A helical membrane pass occupies residues 522-542 (IFVFLESAIFLSCLISFVELL). The Cytoplasmic segment spans residues 543–715 (ALPRKSAYAL…YEHEQDWSGH (173 aa)). The disordered stretch occupies residues 563–680 (HSGYQGYRDS…NGTNDRGRTT (118 aa)). Low complexity-rich tracts occupy residues 577 to 594 (SSGA…PSSP) and 616 to 626 (APSVAAHSSQP). Polar residues predominate over residues 636 to 647 (GRSTSAPIPSTT). Residues 650–661 (DEDESEDDDDEA) are compositionally biased toward acidic residues. A helical membrane pass occupies residues 716–736 (LPSWAWFFQFLLLGPFMIILA). Residues 737-758 (AQTGLMLTDAVYQTGSDGSKLF) lie on the Vacuolar side of the membrane. The chain crosses the membrane as a helical span at residues 759–779 (TPYLMIFFFTLLLILPLTPFI). The Cytoplasmic portion of the chain corresponds to 780-785 (HRVTHH). The helical transmembrane segment at 786-806 (IPVFLLVVFIVTLTYNLIAFP) threads the bilayer. The Vacuolar segment spans residues 807–1040 (FSANNRYKAF…VEGRKAFKIV (234 aa)). N900 carries N-linked (GlcNAc...) asparagine glycosylation.

It belongs to the peptidase M28 family. Zn(2+) serves as cofactor.

It is found in the vacuole membrane. Its function is as follows. May be involved in vacuolar sorting and osmoregulation. The chain is Vacuolar membrane protease from Sordaria macrospora (strain ATCC MYA-333 / DSM 997 / K(L3346) / K-hell).